The primary structure comprises 84 residues: Omega-conotoxin-like ArMKLT1-02 (84 aa).

Residues 1–22 form the signal peptide; the sequence is MKVTCMMIVAVLFLTAWTFVTA. A propeptide spanning residues 23-51 is cleaved from the precursor; it reads DDSISALEDLFAKAHDKMENSEASPLNER. Cystine bridges form between cysteine 53–cysteine 71, cysteine 60–cysteine 75, and cysteine 70–cysteine 79.

Belongs to the conotoxin O1 superfamily. In terms of tissue distribution, expressed by the venom duct.

The protein resides in the secreted. Functionally, omega-conotoxins act at presynaptic membranes, they bind and block voltage-gated calcium channels (Cav). The protein is Omega-conotoxin-like ArMKLT1-02 of Conus arenatus (Sand-dusted cone).